The primary structure comprises 296 residues: Phosphatidylserine decarboxylase proenzyme (296 aa).

Active-site charge relay system; for autoendoproteolytic cleavage activity residues include D113, H169, and S256. S256 functions as the Schiff-base intermediate with substrate; via pyruvic acid; for decarboxylase activity in the catalytic mechanism. At S256 the chain carries Pyruvic acid (Ser); by autocatalysis.

The protein belongs to the phosphatidylserine decarboxylase family. PSD-B subfamily. Prokaryotic type II sub-subfamily. In terms of assembly, heterodimer of a large membrane-associated beta subunit and a small pyruvoyl-containing alpha subunit. Pyruvate serves as cofactor. In terms of processing, is synthesized initially as an inactive proenzyme. Formation of the active enzyme involves a self-maturation process in which the active site pyruvoyl group is generated from an internal serine residue via an autocatalytic post-translational modification. Two non-identical subunits are generated from the proenzyme in this reaction, and the pyruvate is formed at the N-terminus of the alpha chain, which is derived from the carboxyl end of the proenzyme. The autoendoproteolytic cleavage occurs by a canonical serine protease mechanism, in which the side chain hydroxyl group of the serine supplies its oxygen atom to form the C-terminus of the beta chain, while the remainder of the serine residue undergoes an oxidative deamination to produce ammonia and the pyruvoyl prosthetic group on the alpha chain. During this reaction, the Ser that is part of the protease active site of the proenzyme becomes the pyruvoyl prosthetic group, which constitutes an essential element of the active site of the mature decarboxylase.

It localises to the cell membrane. It carries out the reaction a 1,2-diacyl-sn-glycero-3-phospho-L-serine + H(+) = a 1,2-diacyl-sn-glycero-3-phosphoethanolamine + CO2. It participates in phospholipid metabolism; phosphatidylethanolamine biosynthesis; phosphatidylethanolamine from CDP-diacylglycerol: step 2/2. Functionally, catalyzes the formation of phosphatidylethanolamine (PtdEtn) from phosphatidylserine (PtdSer). The chain is Phosphatidylserine decarboxylase proenzyme from Clostridium botulinum (strain Eklund 17B / Type B).